The sequence spans 379 residues: Subtilisin Carlsberg (379 aa).

A signal peptide spans 1–29 (MMRKKSFWLGMLTAFMLVFTMAFSDSASA). The propeptide occupies 30 to 105 (AQPAKNVEKD…VEEDHVAHAL (76 aa)). The 59-residue stretch at 44 to 102 (FKSGVKTASVKKDIIKESGGKVDKQFRIINAAKAKLDKEALKEVKNDPDVAYVEEDHVA) folds into the Inhibitor I9 domain. Residue glutamine 107 participates in Ca(2+) binding. In terms of domain architecture, Peptidase S8 spans 110-378 (PYGIPLIKAD…KGLINVEAAA (269 aa)). Aspartate 137 serves as the catalytic Charge relay system. Aspartate 146 lines the Ca(2+) pocket. Catalysis depends on histidine 168, which acts as the Charge relay system. Residues leucine 179, asparagine 181, threonine 183, valine 185, alanine 273, tyrosine 275, and valine 278 each coordinate Ca(2+). Serine 325 acts as the Charge relay system in catalysis.

Belongs to the peptidase S8 family. It depends on Ca(2+) as a cofactor.

Its subcellular location is the secreted. It carries out the reaction Hydrolysis of proteins with broad specificity for peptide bonds, and a preference for a large uncharged residue in P1. Hydrolyzes peptide amides.. Inhibited by p-chlorophenyl and 1-naphthyl boronic acid derivatives. In terms of biological role, subtilisin is an extracellular alkaline serine protease, it catalyzes the hydrolysis of proteins and peptide amides. Shows high specificity for aromatic and hydrophobic amino acids in the P1 substrate position. May play an important role in the degradation of feather keratin. This is Subtilisin Carlsberg from Bacillus licheniformis.